Reading from the N-terminus, the 605-residue chain is DNA primase (605 aa).

The CHC2-type zinc finger occupies 38-62 (CPFHDEKTPSFTVSEDKQICHCFGC). The Toprim domain maps to 260-341 (DEIVLLEGFM…NVFVIQLPSG (82 aa)). Glutamate 266, aspartate 310, and aspartate 312 together coordinate Mg(2+).

The protein belongs to the DnaG primase family. Monomer. Interacts with DnaB. Zn(2+) is required as a cofactor. It depends on Mg(2+) as a cofactor.

The catalysed reaction is ssDNA + n NTP = ssDNA/pppN(pN)n-1 hybrid + (n-1) diphosphate.. RNA polymerase that catalyzes the synthesis of short RNA molecules used as primers for DNA polymerase during DNA replication. This chain is DNA primase, found in Staphylococcus aureus.